The primary structure comprises 690 residues: Elongation factor G (690 aa).

Positions 8 to 283 constitute a tr-type G domain; the sequence is SKCRNIGIMA…AVVDFLPAPN (276 aa). GTP-binding positions include 17–24, 81–85, and 135–138; these read AHIDAGKT, DTPGH, and NKMD.

The protein belongs to the TRAFAC class translation factor GTPase superfamily. Classic translation factor GTPase family. EF-G/EF-2 subfamily.

The protein resides in the cytoplasm. Its function is as follows. Catalyzes the GTP-dependent ribosomal translocation step during translation elongation. During this step, the ribosome changes from the pre-translocational (PRE) to the post-translocational (POST) state as the newly formed A-site-bound peptidyl-tRNA and P-site-bound deacylated tRNA move to the P and E sites, respectively. Catalyzes the coordinated movement of the two tRNA molecules, the mRNA and conformational changes in the ribosome. The sequence is that of Elongation factor G from Ehrlichia chaffeensis (strain ATCC CRL-10679 / Arkansas).